The chain runs to 502 residues: Glycerol kinase (502 aa).

T14 is a binding site for ADP. ATP-binding residues include T14, T15, and S16. T14 is a binding site for sn-glycerol 3-phosphate. R18 is an ADP binding site. R84, E85, and Y136 together coordinate sn-glycerol 3-phosphate. 3 residues coordinate glycerol: R84, E85, and Y136. The residue at position 232 (H232) is a Phosphohistidine; by HPr. Position 246 (D246) interacts with sn-glycerol 3-phosphate. 2 residues coordinate glycerol: D246 and Q247. Residues T268 and G311 each coordinate ADP. T268, G311, Q315, and G412 together coordinate ATP. G412 and N416 together coordinate ADP.

Belongs to the FGGY kinase family. In terms of assembly, homotetramer and homodimer (in equilibrium). Post-translationally, the phosphoenolpyruvate-dependent sugar phosphotransferase system (PTS), including enzyme I, and histidine-containing protein (HPr) are required for the phosphorylation, which leads to the activation of the enzyme.

The enzyme catalyses glycerol + ATP = sn-glycerol 3-phosphate + ADP + H(+). Its pathway is polyol metabolism; glycerol degradation via glycerol kinase pathway; sn-glycerol 3-phosphate from glycerol: step 1/1. With respect to regulation, activated by phosphorylation and inhibited by fructose 1,6-bisphosphate (FBP). Functionally, key enzyme in the regulation of glycerol uptake and metabolism. Catalyzes the phosphorylation of glycerol to yield sn-glycerol 3-phosphate. This is Glycerol kinase from Streptococcus pneumoniae serotype 19F (strain G54).